The following is a 405-amino-acid chain: Nuclear hormone receptor family member nhr-199 (405 aa).

Residues Ile20–Gln111 constitute a DNA-binding region (nuclear receptor). 2 NR C4-type zinc fingers span residues Cys23–Cys44 and Cys60–Cys94. The NR LBD domain occupies Arg126–Lys376.

This sequence belongs to the nuclear hormone receptor family.

The protein localises to the nucleus. In terms of biological role, orphan nuclear receptor. The polypeptide is Nuclear hormone receptor family member nhr-199 (nhr-199) (Caenorhabditis elegans).